Consider the following 442-residue polypeptide: Ankyrin repeat and MYND domain-containing protein 2 (442 aa).

3 ANK repeats span residues 45-74 (NGMTPLMHAAYKGKLDMCKLLLRHGADVNC), 79-108 (HGYTALMFAALSGNKDITWVMLEAGAETDV), and 159-188 (KLAGPLHKIITTTNLHPVKIVMLINENPLL). Residues Cys-320, Cys-323, Cys-332, Cys-335, Cys-341, Cys-345, His-353, and Cys-357 each contribute to the Zn(2+) site. The segment at 320 to 357 (CTTCGEKGASKRCSVCKMVIYCDQTCQKTHWFAHKKIC) adopts an MYND-type zinc-finger fold. Residues 401–421 (TRICQKNDNPKDSEEGEKESL) are compositionally biased toward basic and acidic residues. The disordered stretch occupies residues 401 to 442 (TRICQKNDNPKDSEEGEKESLQSDAGLEGLQEAAVGPQVSEE).

As to quaternary structure, interacts with the retinal-specific guanylyl cyclase GC1.

The protein resides in the cell projection. It is found in the cilium. Its function is as follows. May be involved in the trafficking of signaling proteins to the cilia. In Bos taurus (Bovine), this protein is Ankyrin repeat and MYND domain-containing protein 2 (ANKMY2).